A 311-amino-acid chain; its full sequence is Malate dehydrogenase (311 aa).

NAD(+) contacts are provided by residues 7–13 (GAAGGIG) and D34. Substrate contacts are provided by R81 and R87. Residues N94 and 117 to 119 (ITN) contribute to the NAD(+) site. Substrate is bound by residues N119 and R153. The active-site Proton acceptor is the H177. M227 is an NAD(+) binding site.

It belongs to the LDH/MDH superfamily. MDH type 1 family. Homodimer.

The enzyme catalyses (S)-malate + NAD(+) = oxaloacetate + NADH + H(+). Functionally, catalyzes the reversible oxidation of malate to oxaloacetate. The polypeptide is Malate dehydrogenase (Shewanella piezotolerans (strain WP3 / JCM 13877)).